A 1113-amino-acid polypeptide reads, in one-letter code: uncharacterized protein (1113 aa).

313–320 (GPPGTGKS) is a binding site for ATP.

The protein belongs to the DNA2/NAM7 helicase family.

This is an uncharacterized protein from Mycoplasma genitalium (strain ATCC 33530 / DSM 19775 / NCTC 10195 / G37) (Mycoplasmoides genitalium).